Here is a 277-residue protein sequence, read N- to C-terminus: Putative phosphoenolpyruvate synthase regulatory protein (277 aa).

ADP is bound at residue 157–164 (GVSRSGKT).

It belongs to the pyruvate, phosphate/water dikinase regulatory protein family. PSRP subfamily.

It carries out the reaction [pyruvate, water dikinase] + ADP = [pyruvate, water dikinase]-phosphate + AMP + H(+). The catalysed reaction is [pyruvate, water dikinase]-phosphate + phosphate + H(+) = [pyruvate, water dikinase] + diphosphate. In terms of biological role, bifunctional serine/threonine kinase and phosphorylase involved in the regulation of the phosphoenolpyruvate synthase (PEPS) by catalyzing its phosphorylation/dephosphorylation. This Aromatoleum aromaticum (strain DSM 19018 / LMG 30748 / EbN1) (Azoarcus sp. (strain EbN1)) protein is Putative phosphoenolpyruvate synthase regulatory protein.